The following is a 515-amino-acid chain: Cytochrome P450 monooxygenase ptmJ (515 aa).

The next 4 helical transmembrane spans lie at 6–26 (LGPFRTFTLLTVGLLLSLFVI), 50–70 (LGVVLAEILASPEGFFHLFCV), 82–102 (VFYLDLWPILPSIMVVAEPVV), and 300–320 (VIILASVVTAGAASYCYLFLH). Heme is bound at residue Cys-449.

It belongs to the cytochrome P450 family. The cofactor is heme.

It is found in the membrane. The protein operates within secondary metabolite biosynthesis. Functionally, cytochrome P450 monooxygenase; part of the gene cluster that mediates the biosynthesis of the indole diterpenes penitrems. The geranylgeranyl diphosphate (GGPP) synthase ptmG catalyzes the first step in penitrem biosynthesis via conversion of farnesyl pyrophosphate and isopentyl pyrophosphate into geranylgeranyl pyrophosphate (GGPP). Condensation of indole-3-glycerol phosphate with GGPP by the prenyl transferase ptmC then forms 3-geranylgeranylindole (3-GGI). Epoxidation by the FAD-dependent monooxygenase ptmM leads to a epoxidized-GGI that is substrate of the terpene cyclase ptmB for cyclization to yield paspaline. Paspaline is subsequently converted to 13-desoxypaxilline by the cytochrome P450 monooxygenase ptmP, the latter being then converted to paxilline by the cytochrome P450 monooxygenase ptmQ. Paxilline is converted to beta-paxitriol via C-10 ketoreduction by the short-chain dehydrogenase ptmH which can be monoprenylated at the C-20 by the indole diterpene prenyltransferase ptmD. A two-step elimination (acetylation and elimination) process performed by the O-acetyltransferase ptmV and ptmI leads to the production of the prenylated form of penijanthine. The FAD-linked oxidoreductase ptmO then converts the prenylated form of penijanthine into PC-M5 which is in turn transformed into PC-M4 by the aromatic dimethylallyltransferase ptmE. Five sequential oxidative transformations performed by the cytochrome P450 monooxygenases ptmK, ptmU, ptmL, ptmN and ptmJ yield the various penitrem compounds. PtmK, ptmU and ptmM are involved in the formation of the key bicyclic ring of penitrem C via the formation of the intermediates secopenitrem D and penitrem D. PtmL catalyzes the epoxidation of penitrem D and C to yield penitrem B and F, respectively. PtmJ catalyzes the last benzylic hydroxylation to convert penitrem B to prenitrem E and penitrem F to penitrem A. In Penicillium ochrochloron, this protein is Cytochrome P450 monooxygenase ptmJ.